We begin with the raw amino-acid sequence, 391 residues long: MEERTRAYLRGRFGDVYRRAEIDLPPRADDREWGYIPWTAGPDTTMVRHKSTLDLGSMTSFLERKCPRHVYFSAGTYDAPGAATMDEKHWQGSDLVFDLDADHLPRVTLGEDSYAEMLSKCKDALLRLLDFLERDFGFEELTVTFSGGRGYHVHVRDAGVYELGSEERREIVDYVRGNDLALETLVEAEPVGGRGLENPTEKRMLPADGGWGRRVTTRLEAFADDLIERGEDDAVATLTEFDGVGERSARAIYNVVADNTTAVKRGNVDVHPAFLTVARRYIDETVAAEQAPIDEPVTTDTNRLIRLPGSLHGGSGLEVQRLDRAALDDFDPLVDAVPETFVGHDITVELPTEHTVELRGESLTVGPGVSTVPEYAGVFMMARGTAEKATE.

Residues D98, D100, and D294 contribute to the active site.

This sequence belongs to the eukaryotic-type primase small subunit family. In terms of assembly, heterodimer of a small subunit (PriS) and a large subunit (PriL). Requires Mg(2+) as cofactor. Mn(2+) serves as cofactor.

In terms of biological role, catalytic subunit of DNA primase, an RNA polymerase that catalyzes the synthesis of short RNA molecules used as primers for DNA polymerase during DNA replication. The small subunit contains the primase catalytic core and has DNA synthesis activity on its own. Binding to the large subunit stabilizes and modulates the activity, increasing the rate of DNA synthesis while decreasing the length of the DNA fragments, and conferring RNA synthesis capability. The DNA polymerase activity may enable DNA primase to also catalyze primer extension after primer synthesis. May also play a role in DNA repair. In Halobacterium salinarum (strain ATCC 29341 / DSM 671 / R1), this protein is DNA primase small subunit PriS.